Reading from the N-terminus, the 202-residue chain is LexA repressor (202 aa).

Residues 28–48 constitute a DNA-binding region (H-T-H motif); it reads RAEIAAQLGFRSPNAAEEHLK. Residues S119 and K156 each act as for autocatalytic cleavage activity in the active site.

This sequence belongs to the peptidase S24 family. In terms of assembly, homodimer.

It carries out the reaction Hydrolysis of Ala-|-Gly bond in repressor LexA.. Represses a number of genes involved in the response to DNA damage (SOS response), including recA and lexA. Binds to the 16 bp palindromic sequence 5'-CTGTATATATATACAG-3'. In the presence of single-stranded DNA, RecA interacts with LexA causing an autocatalytic cleavage which disrupts the DNA-binding part of LexA, leading to derepression of the SOS regulon and eventually DNA repair. In Erwinia tasmaniensis (strain DSM 17950 / CFBP 7177 / CIP 109463 / NCPPB 4357 / Et1/99), this protein is LexA repressor.